The sequence spans 201 residues: Large ribosomal subunit protein uL4 (201 aa).

Residues 45–71 (AQKTRAEVTGSGKKPWRQKGTGRARAG) are disordered.

The protein belongs to the universal ribosomal protein uL4 family. Part of the 50S ribosomal subunit.

Its function is as follows. One of the primary rRNA binding proteins, this protein initially binds near the 5'-end of the 23S rRNA. It is important during the early stages of 50S assembly. It makes multiple contacts with different domains of the 23S rRNA in the assembled 50S subunit and ribosome. In terms of biological role, forms part of the polypeptide exit tunnel. This Shewanella pealeana (strain ATCC 700345 / ANG-SQ1) protein is Large ribosomal subunit protein uL4.